Consider the following 154-residue polypeptide: Putative pre-16S rRNA nuclease (154 aa).

Belongs to the YqgF nuclease family.

It is found in the cytoplasm. In terms of biological role, could be a nuclease involved in processing of the 5'-end of pre-16S rRNA. This is Putative pre-16S rRNA nuclease from Gluconacetobacter diazotrophicus (strain ATCC 49037 / DSM 5601 / CCUG 37298 / CIP 103539 / LMG 7603 / PAl5).